The primary structure comprises 314 residues: Small ribosomal subunit biogenesis GTPase RsgA (314 aa).

The tract at residues 1–20 is disordered; sequence MKRAPTKQPAKPAARGGERA. In terms of domain architecture, CP-type G spans 85-246; it reads SDQFKSKLFA…LIDSPGFQEF (162 aa). GTP is bound by residues 134–137 and 188–196; these read NKID and GQSGMGKST. Positions 270, 275, 277, and 283 each coordinate Zn(2+).

It belongs to the TRAFAC class YlqF/YawG GTPase family. RsgA subfamily. As to quaternary structure, monomer. Associates with 30S ribosomal subunit, binds 16S rRNA. Requires Zn(2+) as cofactor.

The protein resides in the cytoplasm. Functionally, one of several proteins that assist in the late maturation steps of the functional core of the 30S ribosomal subunit. Helps release RbfA from mature subunits. May play a role in the assembly of ribosomal proteins into the subunit. Circularly permuted GTPase that catalyzes slow GTP hydrolysis, GTPase activity is stimulated by the 30S ribosomal subunit. This Burkholderia pseudomallei (strain K96243) protein is Small ribosomal subunit biogenesis GTPase RsgA.